We begin with the raw amino-acid sequence, 790 residues long: LMBR1 domain-containing protein 2 homolog B (790 aa).

Residues 1-21 are compositionally biased toward low complexity; sequence MSSNTTTPTPTSTPTPTSSPS. The interval 1–22 is disordered; sequence MSSNTTTPTPTSTPTPTSSPSI. The next 5 helical transmembrane spans lie at 34-54, 66-86, 128-148, 167-187, and 195-215; these read FGNL…VLIG, IYAT…AYLV, FLYF…QSFS, VILY…ILSV, and FLSF…TITM. Residues 236-266 are a coiled coil; it reads LRNYRVEAVVLKTELEDVKRQLIDHLKLIKT. Transmembrane regions (helical) follow at residues 401 to 421, 442 to 462, and 539 to 559; these read FIIA…SEIV, PGIG…VCSY, and FTLF…FNLH. Disordered regions lie at residues 630–665, 701–751, and 765–790; these read SQLD…PKLS, LGEK…TKDK, and SFQD…KNKK. Polar residues predominate over residues 644–665; it reads IDSSNRYKPTPTKTSINIPKLS. Positions 706–734 are enriched in low complexity; sequence NASNNNNNNNNNNNNNNSNNKNSNNNNNS. Polar residues predominate over residues 735 to 746; sequence ILTSNYESYSTP. The segment covering 766–778 has biased composition (acidic residues); it reads FQDDDDHTFDDIE.

It belongs to the LIMR family.

It is found in the membrane. This is LMBR1 domain-containing protein 2 homolog B from Dictyostelium discoideum (Social amoeba).